Here is a 154-residue protein sequence, read N- to C-terminus: MQVLVDADACPVVVKEMLYRAAQRVEVCVTLVANQYMRTPPSRFIKSLQVPAGFDVADDRIVELVSSGDLVITADIVLAAAALDKGAYVLDPRGSWFSRENIQERLTMREVMEQLRSSGVDTGGPAAYAQQDSKAFAGQLDRFLARHAPPGAVA.

It belongs to the UPF0178 family.

In Cupriavidus necator (strain ATCC 17699 / DSM 428 / KCTC 22496 / NCIMB 10442 / H16 / Stanier 337) (Ralstonia eutropha), this protein is UPF0178 protein H16_B0290.